Consider the following 257-residue polypeptide: Imidazole glycerol phosphate synthase subunit HisF (257 aa).

Active-site residues include Asp-12 and Asp-131.

The protein belongs to the HisA/HisF family. In terms of assembly, heterodimer of HisH and HisF.

The protein resides in the cytoplasm. It catalyses the reaction 5-[(5-phospho-1-deoxy-D-ribulos-1-ylimino)methylamino]-1-(5-phospho-beta-D-ribosyl)imidazole-4-carboxamide + L-glutamine = D-erythro-1-(imidazol-4-yl)glycerol 3-phosphate + 5-amino-1-(5-phospho-beta-D-ribosyl)imidazole-4-carboxamide + L-glutamate + H(+). It participates in amino-acid biosynthesis; L-histidine biosynthesis; L-histidine from 5-phospho-alpha-D-ribose 1-diphosphate: step 5/9. In terms of biological role, IGPS catalyzes the conversion of PRFAR and glutamine to IGP, AICAR and glutamate. The HisF subunit catalyzes the cyclization activity that produces IGP and AICAR from PRFAR using the ammonia provided by the HisH subunit. In Burkholderia ambifaria (strain MC40-6), this protein is Imidazole glycerol phosphate synthase subunit HisF.